A 179-amino-acid polypeptide reads, in one-letter code: Ribosome maturation factor RimM (179 aa).

The 77-residue stretch at 100 to 176 folds into the PRC barrel domain; it reads KEEFHLLELI…FLIINPPNGL (77 aa).

This sequence belongs to the RimM family. In terms of assembly, binds ribosomal protein uS19.

Its subcellular location is the cytoplasm. In terms of biological role, an accessory protein needed during the final step in the assembly of 30S ribosomal subunit, possibly for assembly of the head region. Essential for efficient processing of 16S rRNA. May be needed both before and after RbfA during the maturation of 16S rRNA. It has affinity for free ribosomal 30S subunits but not for 70S ribosomes. This chain is Ribosome maturation factor RimM, found in Prochlorococcus marinus (strain AS9601).